The chain runs to 113 residues: uncharacterized protein (113 aa).

This sequence to H.influenzae HI_1053 and P.denitrificans COX locus Uncharacterized protein 4.

This is an uncharacterized protein from Cupriavidus necator (strain ATCC 17699 / DSM 428 / KCTC 22496 / NCIMB 10442 / H16 / Stanier 337) (Ralstonia eutropha).